Consider the following 525-residue polypeptide: PE-PGRS family protein PE_PGRS47 (525 aa).

The PE domain maps to 1–93 (MSFVIAAPEF…AYSYASAEAA (93 aa)). The disordered stretch occupies residues 506 to 525 (VGGAGGLLEGQNGENGLLPS). Over residues 514–525 (EGQNGENGLLPS) the composition is skewed to low complexity.

Belongs to the mycobacterial PE family. PGRS subfamily.

It is found in the secreted. The protein localises to the cell surface. It localises to the host cytoplasm. Its subcellular location is the host cytosol. Functionally, contributes to evasion of both innate and adaptive immunity. Inhibits autophagy in infected host phagocytes and inhibits major histocompatibility complex (MHC) class II antigen presentation by mycobacteria-infected dendritic cells. Has an important role in the growth and survival of M.tuberculosis, particularly during intracellular growth and in the later chronic phase of infection. The chain is PE-PGRS family protein PE_PGRS47 from Mycobacterium tuberculosis (strain ATCC 25618 / H37Rv).